Consider the following 388-residue polypeptide: Pepsin A-1 (388 aa).

An N-terminal signal peptide occupies residues 1–15 (MKWLLLLGLVALSEC). 2 consecutive propeptides (activation peptide) follow at residues 16–40 (IIYK…LLKD) and 41–62 (FLKK…APTL). Residues 76 to 385 (YFGTIGIGTP…DRANNQVGLA (310 aa)) enclose the Peptidase A1 domain. Aspartate 94 is a catalytic residue. Cysteine 107 and cysteine 112 form a disulfide bridge. Serine 130 is modified (phosphoserine). A disulfide bridge links cysteine 268 with cysteine 272. Aspartate 277 is an active-site residue. Cysteine 311 and cysteine 344 are disulfide-bonded.

This sequence belongs to the peptidase A1 family. In terms of processing, each pepsinogen is converted to corresponding pepsin at pH 2.0 in part as a result of the release of a 47 AA activation segment and in part as a result of stepwise proteolytic cleavage via an intermediate form(s).

The protein localises to the secreted. It catalyses the reaction Preferential cleavage: hydrophobic, preferably aromatic, residues in P1 and P1' positions. Cleaves 1-Phe-|-Val-2, 4-Gln-|-His-5, 13-Glu-|-Ala-14, 14-Ala-|-Leu-15, 15-Leu-|-Tyr-16, 16-Tyr-|-Leu-17, 23-Gly-|-Phe-24, 24-Phe-|-Phe-25 and 25-Phe-|-Tyr-26 bonds in the B chain of insulin.. Shows particularly broad specificity; although bonds involving phenylalanine and leucine are preferred, many others are also cleaved to some extent. The chain is Pepsin A-1 (PGA) from Macaca fuscata fuscata (Japanese macaque).